A 466-amino-acid chain; its full sequence is Coagulation factor VII (466 aa).

The N-terminal stretch at 1 to 20 is a signal peptide; it reads MVSQALRLLCLLLGLQGCLA. Positions 21–60 are excised as a propeptide; sequence AGGVAKASGGETRDMPWKPGPHRVFVTQEEAHGVLHRRRR. The Gla domain maps to 61–105; sequence ANAFLEELRPGSLERECKEEQCSFEEAREIFKDAERTKLFWISYS. 10 positions are modified to 4-carboxyglutamate: E66, E67, E74, E76, E79, E80, E85, E86, E89, and E95. The cysteines at positions 77 and 82 are disulfide-linked. The region spanning 106 to 142 is the EGF-like 1; calcium-binding domain; it reads DGDQCASSPCQNGGSCKDQLQSYICFCLPAFEGRNCE. 10 disulfides stabilise this stretch: C110/C121, C115/C130, C132/C141, C151/C162, C158/C172, C174/C187, C195/C322, C219/C224, C238/C254, and C370/C389. S112 carries O-linked (Glc...) serine; alternate glycosylation. A glycan (O-linked (Xyl...) serine; alternate) is linked at S112. O-linked (Fuc) serine glycosylation is present at S120. D123 bears the (3R)-3-hydroxyaspartate mark. One can recognise an EGF-like 2 domain in the interval 147-188; the sequence is DQLICVNENGGCEQYCSDHTGTKRSCRCHEGYSLLADGVSCT. N-linked (GlcNAc...) asparagine glycosylation is present at N205. One can recognise a Peptidase S1 domain in the interval 213 to 452; the sequence is IVGGKVCPKG…YIEWLQKLMR (240 aa). Active-site charge relay system residues include H253 and D302. The N-linked (GlcNAc...) asparagine glycan is linked to N382. D398 is a binding site for substrate. C400 and C428 are disulfide-bonded. The active-site Charge relay system is the S404.

It belongs to the peptidase S1 family. Heterodimer of a light chain and a heavy chain linked by a disulfide bond. Interacts (activated) with iripin-8, a serine protease inhibitor from Ixodes ricinus saliva. Post-translationally, the vitamin K-dependent, enzymatic carboxylation of some glutamate residues allows the modified protein to bind calcium. The iron and 2-oxoglutarate dependent 3-hydroxylation of aspartate and asparagine is (R) stereospecific within EGF domains. In terms of processing, O- and N-glycosylated. N-glycosylation at Asn-205 occurs cotranslationally and is mediated by STT3A-containing complexes, while glycosylation at Asn-382 is post-translational and is mediated STT3B-containing complexes before folding. O-fucosylated by POFUT1 on a conserved serine or threonine residue found in the consensus sequence C2-X(4,5)-[S/T]-C3 of EGF domains, where C2 and C3 are the second and third conserved cysteines. Post-translationally, can be either O-glucosylated or O-xylosylated at Ser-112 by POGLUT1 in vitro. Plasma.

The protein localises to the secreted. It catalyses the reaction Selective cleavage of Arg-|-Ile bond in factor X to form factor Xa.. In terms of biological role, initiates the extrinsic pathway of blood coagulation. Serine protease that circulates in the blood in a zymogen form. Factor VII is converted to factor VIIa by factor Xa, factor XIIa, factor IXa, or thrombin by minor proteolysis. In the presence of tissue factor and calcium ions, factor VIIa then converts factor X to factor Xa by limited proteolysis. Factor VIIa also converts factor IX to factor IXa in the presence of tissue factor and calcium. The chain is Coagulation factor VII (F7) from Homo sapiens (Human).